A 257-amino-acid chain; its full sequence is UPF0246 protein LPC_0782 (257 aa).

The protein belongs to the UPF0246 family.

This Legionella pneumophila (strain Corby) protein is UPF0246 protein LPC_0782.